A 612-amino-acid polypeptide reads, in one-letter code: Chaperone protein DnaK (612 aa).

Thr-173 carries the phosphothreonine; by autocatalysis modification. The interval 576–612 is disordered; it reads AAKQAQAQQDGGAGAKKADDNVVDAEYEEVNDDKDQK. Over residues 596–612 the composition is skewed to acidic residues; sequence NVVDAEYEEVNDDKDQK.

Belongs to the heat shock protein 70 family.

In terms of biological role, acts as a chaperone. The polypeptide is Chaperone protein DnaK (Bacillus licheniformis (strain ATCC 14580 / DSM 13 / JCM 2505 / CCUG 7422 / NBRC 12200 / NCIMB 9375 / NCTC 10341 / NRRL NRS-1264 / Gibson 46)).